A 320-amino-acid chain; its full sequence is Cytochrome f (320 aa).

A signal peptide spans 1-35; it reads MENRNTFSWVKEQITRSISVSIMIYVITRTSISNA. Heme-binding residues include Y36, C56, C59, and H60. The chain crosses the membrane as a helical span at residues 286 to 305; the sequence is VQGLLFFFASVILAQVFLVL.

The protein belongs to the cytochrome f family. In terms of assembly, the 4 large subunits of the cytochrome b6-f complex are cytochrome b6, subunit IV (17 kDa polypeptide, petD), cytochrome f and the Rieske protein, while the 4 small subunits are PetG, PetL, PetM and PetN. The complex functions as a dimer. The cofactor is heme.

Its subcellular location is the plastid. The protein resides in the chloroplast thylakoid membrane. Component of the cytochrome b6-f complex, which mediates electron transfer between photosystem II (PSII) and photosystem I (PSI), cyclic electron flow around PSI, and state transitions. The sequence is that of Cytochrome f (petA) from Triticum aestivum (Wheat).